A 424-amino-acid polypeptide reads, in one-letter code: UDP-N-acetylglucosamine 1-carboxyvinyltransferase (424 aa).

Lys22–Asn23 provides a ligand contact to phosphoenolpyruvate. Arg96 provides a ligand contact to UDP-N-acetyl-alpha-D-glucosamine. Cys120 (proton donor) is an active-site residue. A 2-(S-cysteinyl)pyruvic acid O-phosphothioketal modification is found at Cys120. UDP-N-acetyl-alpha-D-glucosamine-binding positions include Arg125–Gln129, Asp312, and Ile334.

This sequence belongs to the EPSP synthase family. MurA subfamily.

The protein resides in the cytoplasm. It catalyses the reaction phosphoenolpyruvate + UDP-N-acetyl-alpha-D-glucosamine = UDP-N-acetyl-3-O-(1-carboxyvinyl)-alpha-D-glucosamine + phosphate. Its pathway is cell wall biogenesis; peptidoglycan biosynthesis. Cell wall formation. Adds enolpyruvyl to UDP-N-acetylglucosamine. This chain is UDP-N-acetylglucosamine 1-carboxyvinyltransferase, found in Polynucleobacter asymbioticus (strain DSM 18221 / CIP 109841 / QLW-P1DMWA-1) (Polynucleobacter necessarius subsp. asymbioticus).